The following is a 121-amino-acid chain: Nitrogen fixation nifHD region GlnB-like protein 2 (121 aa).

It belongs to the P(II) protein family.

In terms of biological role, could be involved in the regulation of nitrogen fixation. The protein is Nitrogen fixation nifHD region GlnB-like protein 2 (glnBB) of Methanothermobacter marburgensis (strain ATCC BAA-927 / DSM 2133 / JCM 14651 / NBRC 100331 / OCM 82 / Marburg) (Methanobacterium thermoautotrophicum).